Consider the following 521-residue polypeptide: Probable methylmalonate-semialdehyde/malonate-semialdehyde dehydrogenase [acylating], mitochondrial (521 aa).

NAD(+) contacts are provided by Phe172, Lys196, Glu199, Arg200, and Ser249. The active-site Nucleophile is Cys304. Residue Glu404 participates in NAD(+) binding.

Belongs to the aldehyde dehydrogenase family. In terms of assembly, homotetramer.

The protein resides in the mitochondrion. The enzyme catalyses 2-methyl-3-oxopropanoate + NAD(+) + CoA + H2O = propanoyl-CoA + hydrogencarbonate + NADH + H(+). It catalyses the reaction 3-oxopropanoate + NAD(+) + CoA + H2O = hydrogencarbonate + acetyl-CoA + NADH + H(+). In terms of biological role, probable malonate and methylmalonate semialdehyde dehydrogenase involved in the catabolism of valine, thymine, and compounds catabolized by way of beta-alanine, including uracil and cytidine. This is Probable methylmalonate-semialdehyde/malonate-semialdehyde dehydrogenase [acylating], mitochondrial from Aedes aegypti (Yellowfever mosquito).